The sequence spans 181 residues: Probable cobalt-precorrin-6B C(15)-methyltransferase (decarboxylating) (181 aa).

S-adenosyl-L-methionine contacts are provided by residues T16, 40–44, D61, and A89; that span reads GCGSG.

Belongs to the methyltransferase superfamily. Archaeal-type CbiT family.

The catalysed reaction is Co-precorrin-6B + S-adenosyl-L-methionine = Co-precorrin-7 + S-adenosyl-L-homocysteine + CO2. It functions in the pathway cofactor biosynthesis; adenosylcobalamin biosynthesis; cob(II)yrinate a,c-diamide from sirohydrochlorin (anaerobic route): step 8/10. Functionally, catalyzes the methylation of C-15 in cobalt-precorrin-6B followed by the decarboxylation of C-12 to form cobalt-precorrin-7. This chain is Probable cobalt-precorrin-6B C(15)-methyltransferase (decarboxylating), found in Methanococcus maripaludis (strain C5 / ATCC BAA-1333).